Consider the following 187-residue polypeptide: UPF0301 protein SG2023 (187 aa).

The protein belongs to the UPF0301 (AlgH) family.

In Sodalis glossinidius (strain morsitans), this protein is UPF0301 protein SG2023.